Here is a 335-residue protein sequence, read N- to C-terminus: Calcium-binding protein TgpCaBP (335 aa).

A helical transmembrane segment spans residues 30–50 (LPLCVFSLFLFSFAFSALSGA). EF-hand domains follow at residues 113-148 (MHQH…SLDQ), 153-188 (QHKK…GKDE), 190-225 (LMKI…GSLN), and 227-262 (VEKT…PHSH). Ca(2+) is bound by residues aspartate 126, aspartate 128, aspartate 130, lysine 132, glutamate 137, aspartate 166, aspartate 168, aspartate 170, glutamate 177, aspartate 203, asparagine 205, aspartate 207, lysine 209, glutamate 214, aspartate 240, asparagine 242, aspartate 244, and glutamate 251. The short motif at 332–335 (HDEL) is the Prevents secretion from ER element.

It localises to the endoplasmic reticulum membrane. Its subcellular location is the cytoplasm. The protein localises to the cytosol. Calcium-binding protein. Participates in the efflux of intracellular Ca(2+) and storage of Ca(2+) in the endoplasmic reticulum. Required for gliding, host cell invasion and egress. Required for microneme secretion. This chain is Calcium-binding protein TgpCaBP, found in Toxoplasma gondii.